A 394-amino-acid polypeptide reads, in one-letter code: Na(+)/H(+) antiporter NhaA (394 aa).

Transmembrane regions (helical) follow at residues 24–44 (AGLV…SPLA), 58–78 (LSVQ…LVGL), 96–116 (TLPG…YVML), 126–146 (GWAI…SLLG), 155–175 (IFLA…IAIF), 180–200 (INVA…SLCA), 214–234 (AVLW…GVLL), 267–287 (VAFA…FASI), 300–320 (VAAG…ALMV), 336–356 (VLGV…IGLL), and 370–390 (GILA…RIAG).

Belongs to the NhaA Na(+)/H(+) (TC 2.A.33) antiporter family.

It is found in the cell inner membrane. The enzyme catalyses Na(+)(in) + 2 H(+)(out) = Na(+)(out) + 2 H(+)(in). Na(+)/H(+) antiporter that extrudes sodium in exchange for external protons. In Azorhizobium caulinodans (strain ATCC 43989 / DSM 5975 / JCM 20966 / LMG 6465 / NBRC 14845 / NCIMB 13405 / ORS 571), this protein is Na(+)/H(+) antiporter NhaA.